The sequence spans 239 residues: 2-C-methyl-D-erythritol 4-phosphate cytidylyltransferase (239 aa).

It belongs to the IspD/TarI cytidylyltransferase family. IspD subfamily. Homodimer.

It catalyses the reaction 2-C-methyl-D-erythritol 4-phosphate + CTP + H(+) = 4-CDP-2-C-methyl-D-erythritol + diphosphate. Its pathway is isoprenoid biosynthesis; isopentenyl diphosphate biosynthesis via DXP pathway; isopentenyl diphosphate from 1-deoxy-D-xylulose 5-phosphate: step 2/6. Catalyzes the formation of 4-diphosphocytidyl-2-C-methyl-D-erythritol from CTP and 2-C-methyl-D-erythritol 4-phosphate (MEP). In Sodalis glossinidius (strain morsitans), this protein is 2-C-methyl-D-erythritol 4-phosphate cytidylyltransferase.